Consider the following 127-residue polypeptide: Aspartate 1-decarboxylase (127 aa).

S25 serves as the catalytic Schiff-base intermediate with substrate; via pyruvic acid. Position 25 is a pyruvic acid (Ser) (S25). T57 contributes to the substrate binding site. The active-site Proton donor is the Y58. Residue 73 to 75 (GAA) participates in substrate binding.

It belongs to the PanD family. Heterooctamer of four alpha and four beta subunits. It depends on pyruvate as a cofactor. In terms of processing, is synthesized initially as an inactive proenzyme, which is activated by self-cleavage at a specific serine bond to produce a beta-subunit with a hydroxyl group at its C-terminus and an alpha-subunit with a pyruvoyl group at its N-terminus.

The protein resides in the cytoplasm. It catalyses the reaction L-aspartate + H(+) = beta-alanine + CO2. It participates in cofactor biosynthesis; (R)-pantothenate biosynthesis; beta-alanine from L-aspartate: step 1/1. In terms of biological role, catalyzes the pyruvoyl-dependent decarboxylation of aspartate to produce beta-alanine. This Neisseria gonorrhoeae (strain ATCC 700825 / FA 1090) protein is Aspartate 1-decarboxylase.